Reading from the N-terminus, the 1035-residue chain is Valine--tRNA ligase (1035 aa).

The 'HIGH' region motif lies at 45 to 55 (PNVTGALHLGH). Residues 253 to 281 (EKLSDANEKEAVDLNKQIEALQKRREERL) are a coiled coil. Lys619 serves as a coordination point for ATP. Positions 967 to 1035 (DVEAELARLE…QDILKLQSKK (69 aa)) form a coiled coil.

This sequence belongs to the class-I aminoacyl-tRNA synthetase family. ValS type 1 subfamily. In terms of assembly, monomer.

The protein resides in the cytoplasm. It catalyses the reaction tRNA(Val) + L-valine + ATP = L-valyl-tRNA(Val) + AMP + diphosphate. Catalyzes the attachment of valine to tRNA(Val). As ValRS can inadvertently accommodate and process structurally similar amino acids such as threonine, to avoid such errors, it has a 'posttransfer' editing activity that hydrolyzes mischarged Thr-tRNA(Val) in a tRNA-dependent manner. The sequence is that of Valine--tRNA ligase from Rhodopirellula baltica (strain DSM 10527 / NCIMB 13988 / SH1).